Here is a 497-residue protein sequence, read N- to C-terminus: DNA-dependent metalloprotease SPRTN (497 aa).

Met1 carries the post-translational modification N-acetylmethionine. Residues 46 to 213 (LQALFLQFND…KTCGGTYIKI (168 aa)) enclose the SprT-like domain. Zn(2+) is bound at residue His112. The active site involves Glu113. 2 residues coordinate Zn(2+): His116 and His131. Lys231 carries the post-translational modification N6-acetyllysine. Positions 254–262 (FSGKGYVLG) match the SHP-box motif. At Ser269 the chain carries Phosphoserine. Lys304 is covalently cross-linked (Glycyl lysine isopeptide (Lys-Gly) (interchain with G-Cter in SUMO2)). The PIP-box motif lies at 326-333 (QSVLSSYF). Residue Lys342 forms a Glycyl lysine isopeptide (Lys-Gly) (interchain with G-Cter in SUMO2); alternate linkage. Lys342 participates in a covalent cross-link: Glycyl lysine isopeptide (Lys-Gly) (interchain with G-Cter in ubiquitin); alternate. Positions 344 to 459 (FRNVNGSPVK…ASAPQSLSSQ (116 aa)) are disordered. The span at 347–356 (VNGSPVKNGT) shows a compositional bias: polar residues. Residue Lys362 forms a Glycyl lysine isopeptide (Lys-Gly) (interchain with G-Cter in SUMO2) linkage. Low complexity predominate over residues 383–404 (TSKVTAPASATVTSAAGTSATI). Residue Ser384 is modified to Phosphoserine. The Nuclear localization signal signature appears at 413 to 424 (DQFLNKRPRLED). Residues 420 to 432 (PRLEDRTALDTIK) show a composition bias toward basic and acidic residues. Lys432 is covalently cross-linked (Glycyl lysine isopeptide (Lys-Gly) (interchain with G-Cter in SUMO2)). Positions 442-459 (RSSSQPTAASAPQSLSSQ) are enriched in low complexity. A UBZ4-type zinc finger spans residues 462–489 (LVNCPVCQGVVVESQINEHLDRCLEGNK). 4 residues coordinate Zn(2+): Cys465, Cys468, His480, and Cys484.

It belongs to the Spartan family. Homodimer. Interacts (VIA PIP-box) with PCNA (when ubiquitinated). Interacts (via its SHP-box) with VCP/p97. Interacts with RAD18. Interacts with KCTD13 and POLD3. The cofactor is Zn(2+). In terms of processing, autocatalytically cleaved in response to double-stranded DNA-binding: autocatalytic cleavage takes place in trans and leads to inactivation. Monoubiquitinated; monoubiquitination promotes exclusion from chromatin. Deubiquitinated by VCPIP1: deubiquitination is required for subsequent acetylation and recruitment to chromatin and DNA damage sites. Post-translationally, acetylated following deubiquitination by VCPIP1, leading to recruitment to chromatin and DNA damage sites. In terms of processing, phosphorylation by CHEK1 promotes recruitment to chromatin.

The protein resides in the nucleus. The protein localises to the chromosome. With respect to regulation, DNA-binding activates the protease activity: single-stranded DNA-binding specifically activates ability to cleave covalent DNA-protein cross-links (DPCs). In contrast, double-stranded DNA-binding specifically activates autocatalytic cleavage, and subsequent inactivation. Functionally, DNA-dependent metalloendopeptidase that mediates the proteolytic cleavage of covalent DNA-protein cross-links (DPCs) during DNA synthesis, thereby playing a key role in maintaining genomic integrity. DPCs are highly toxic DNA lesions that interfere with essential chromatin transactions, such as replication and transcription, and which are induced by reactive agents, such as UV light or formaldehyde. Associates with the DNA replication machinery and specifically removes DPCs during DNA synthesis. Catalyzes proteolytic cleavage of the HMCES DNA-protein cross-link following unfolding by the BRIP1/FANCJ helicase. Acts as a pleiotropic protease for DNA-binding proteins cross-linked with DNA, such as TOP1, TOP2A, histones H3 and H4. Mediates degradation of DPCs that are not ubiquitinated, while it is not able to degrade ubiquitinated DPCs. SPRTN activation requires polymerase collision with DPCs followed by helicase bypass of DPCs. Involved in recruitment of VCP/p97 to sites of DNA damage. Also acts as an activator of CHEK1 during normal DNA replication by mediating proteolytic cleavage of CHEK1, thereby promoting CHEK1 removal from chromatin and subsequent activation. Does not activate CHEK1 in response to DNA damage. May also act as a 'reader' of ubiquitinated PCNA: recruited to sites of UV damage and interacts with ubiquitinated PCNA and RAD18, the E3 ubiquitin ligase that monoubiquitinates PCNA. Facilitates chromatin association of RAD18 and is required for efficient PCNA monoubiquitination, promoting a feed-forward loop to enhance PCNA ubiquitination and translesion DNA synthesis. The polypeptide is DNA-dependent metalloprotease SPRTN (Mus musculus (Mouse)).